A 298-amino-acid polypeptide reads, in one-letter code: Bifunctional protein FolD (298 aa).

NADP(+) is bound by residues 165-167 (GRS), serine 190, and isoleucine 231.

This sequence belongs to the tetrahydrofolate dehydrogenase/cyclohydrolase family. As to quaternary structure, homodimer.

It catalyses the reaction (6R)-5,10-methylene-5,6,7,8-tetrahydrofolate + NADP(+) = (6R)-5,10-methenyltetrahydrofolate + NADPH. It carries out the reaction (6R)-5,10-methenyltetrahydrofolate + H2O = (6R)-10-formyltetrahydrofolate + H(+). It functions in the pathway one-carbon metabolism; tetrahydrofolate interconversion. In terms of biological role, catalyzes the oxidation of 5,10-methylenetetrahydrofolate to 5,10-methenyltetrahydrofolate and then the hydrolysis of 5,10-methenyltetrahydrofolate to 10-formyltetrahydrofolate. This Prochlorococcus marinus subsp. pastoris (strain CCMP1986 / NIES-2087 / MED4) protein is Bifunctional protein FolD.